A 317-amino-acid chain; its full sequence is Acetyl-coenzyme A carboxylase carboxyl transferase subunit alpha (317 aa).

Residues 40 to 293 (LEKRSADALK…GDIIAASLRS (254 aa)) enclose the CoA carboxyltransferase C-terminal domain.

The protein belongs to the AccA family. Acetyl-CoA carboxylase is a heterohexamer composed of biotin carboxyl carrier protein (AccB), biotin carboxylase (AccC) and two subunits each of ACCase subunit alpha (AccA) and ACCase subunit beta (AccD).

It localises to the cytoplasm. It catalyses the reaction N(6)-carboxybiotinyl-L-lysyl-[protein] + acetyl-CoA = N(6)-biotinyl-L-lysyl-[protein] + malonyl-CoA. Its pathway is lipid metabolism; malonyl-CoA biosynthesis; malonyl-CoA from acetyl-CoA: step 1/1. Its function is as follows. Component of the acetyl coenzyme A carboxylase (ACC) complex. First, biotin carboxylase catalyzes the carboxylation of biotin on its carrier protein (BCCP) and then the CO(2) group is transferred by the carboxyltransferase to acetyl-CoA to form malonyl-CoA. This chain is Acetyl-coenzyme A carboxylase carboxyl transferase subunit alpha, found in Brucella canis (strain ATCC 23365 / NCTC 10854 / RM-666).